The following is a 140-amino-acid chain: L-fucose mutarotase (140 aa).

H22 functions as the Proton donor in the catalytic mechanism. Substrate contacts are provided by residues D30, R107, and 129–131 (YGN).

Belongs to the RbsD / FucU family. FucU mutarotase subfamily. As to quaternary structure, homodecamer.

The protein localises to the cytoplasm. The catalysed reaction is alpha-L-fucose = beta-L-fucose. It functions in the pathway carbohydrate metabolism; L-fucose metabolism. In terms of biological role, involved in the anomeric conversion of L-fucose. This is L-fucose mutarotase from Salmonella typhimurium (strain LT2 / SGSC1412 / ATCC 700720).